Here is a 49-residue protein sequence, read N- to C-terminus: Large ribosomal subunit protein bL33B (49 aa).

The protein belongs to the bacterial ribosomal protein bL33 family.

This chain is Large ribosomal subunit protein bL33B, found in Lactobacillus helveticus (strain DPC 4571).